The chain runs to 200 residues: ATP synthase subunit delta', mitochondrial (200 aa).

A mitochondrion-targeting transit peptide spans 1 to 21 (MFRHSSRLLARATTMGWRRPF).

This sequence belongs to the ATPase epsilon chain family. As to quaternary structure, F-type ATPases have 2 components, CF(1) - the catalytic core - and CF(0) - the membrane proton channel. CF(1) has five subunits: alpha(3), beta(3), gamma(1), delta(1), epsilon(1). CF(0) has three main subunits: a, b and c.

It localises to the mitochondrion. It is found in the mitochondrion inner membrane. Mitochondrial membrane ATP synthase (F(1)F(0) ATP synthase or Complex V) produces ATP from ADP in the presence of a proton gradient across the membrane which is generated by electron transport complexes of the respiratory chain. F-type ATPases consist of two structural domains, F(1) - containing the extramembraneous catalytic core, and F(0) - containing the membrane proton channel, linked together by a central stalk and a peripheral stalk. During catalysis, ATP turnover in the catalytic domain of F(1) is coupled via a rotary mechanism of the central stalk subunits to proton translocation. Part of the complex F(1) domain and of the central stalk which is part of the complex rotary element. Rotation of the central stalk against the surrounding alpha(3)beta(3) subunits leads to hydrolysis of ATP in three separate catalytic sites on the beta subunits. The chain is ATP synthase subunit delta', mitochondrial from Ipomoea batatas (Sweet potato).